A 292-amino-acid polypeptide reads, in one-letter code: Probable 2-(5''-triphosphoribosyl)-3'-dephosphocoenzyme-A synthase (292 aa).

The protein belongs to the CitG/MdcB family.

The enzyme catalyses 3'-dephospho-CoA + ATP = 2'-(5''-triphospho-alpha-D-ribosyl)-3'-dephospho-CoA + adenine. The chain is Probable 2-(5''-triphosphoribosyl)-3'-dephosphocoenzyme-A synthase from Shigella flexneri.